The chain runs to 274 residues: ATP synthase subunit a (274 aa).

5 helical membrane-spanning segments follow: residues T43 to F63, V103 to L123, V144 to I164, L223 to P243, and A245 to V265.

The protein belongs to the ATPase A chain family. As to quaternary structure, F-type ATPases have 2 components, CF(1) - the catalytic core - and CF(0) - the membrane proton channel. CF(1) has five subunits: alpha(3), beta(3), gamma(1), delta(1), epsilon(1). CF(0) has three main subunits: a(1), b(2) and c(9-12). The alpha and beta chains form an alternating ring which encloses part of the gamma chain. CF(1) is attached to CF(0) by a central stalk formed by the gamma and epsilon chains, while a peripheral stalk is formed by the delta and b chains.

It localises to the cell inner membrane. Functionally, key component of the proton channel; it plays a direct role in the translocation of protons across the membrane. The sequence is that of ATP synthase subunit a from Photorhabdus laumondii subsp. laumondii (strain DSM 15139 / CIP 105565 / TT01) (Photorhabdus luminescens subsp. laumondii).